A 226-amino-acid chain; its full sequence is Putative N-acetylmannosamine-6-phosphate 2-epimerase (226 aa).

The protein belongs to the NanE family.

The enzyme catalyses an N-acyl-D-glucosamine 6-phosphate = an N-acyl-D-mannosamine 6-phosphate. Its pathway is amino-sugar metabolism; N-acetylneuraminate degradation; D-fructose 6-phosphate from N-acetylneuraminate: step 3/5. Functionally, converts N-acetylmannosamine-6-phosphate (ManNAc-6-P) to N-acetylglucosamine-6-phosphate (GlcNAc-6-P). The chain is Putative N-acetylmannosamine-6-phosphate 2-epimerase from Mycoplasma capricolum subsp. capricolum (strain California kid / ATCC 27343 / NCTC 10154).